The following is a 1704-amino-acid chain: Type-2 histone deacetylase 2 (1704 aa).

Disordered regions lie at residues 1-303 (MSTN…SEER), 315-383 (TQGS…TSKK), and 540-634 (QFLQ…IGNS). A compositionally biased stretch (low complexity) spans 15–69 (TTITNESNTDNNNNNNDDNKNNTENTTSPTNNNNTNDNDNNSDNNNNKNNNNNNS). Polar residues predominate over residues 70–81 (QVTEEQQVTLED). Residues 97-113 (DSAEEDEDEMEDDDEDA) are compositionally biased toward acidic residues. Over residues 134–153 (KVQQSTNTHLSQTTPESPTI) the composition is skewed to polar residues. Residues 165–176 (STSTNNTPNTQS) are compositionally biased toward low complexity. Over residues 186–195 (LTSDEEKDLM) the composition is skewed to basic and acidic residues. Positions 196 to 210 (LSEESDGGVGEDDDS) are enriched in acidic residues. A compositionally biased stretch (low complexity) spans 222–286 (NQSNQNQNNN…SNNDNNNNNN (65 aa)). Residues 315 to 325 (TQGSSTTTSDP) are compositionally biased toward polar residues. The segment covering 326 to 351 (NNQNNQINQINQNNQNNQNNQNNQNN) has biased composition (low complexity). The span at 354–369 (GEEEFGEEFEEEEEDM) shows a compositional bias: acidic residues. Over residues 372–382 (PKKKTKYKTSK) the composition is skewed to basic residues. Low complexity-rich tracts occupy residues 540–549 (QFLQQQQQQQ) and 561–580 (NSNNSNNNNNNNSNNNNNNS). Residues 608–620 (YETRKYTKKRNDE) show a composition bias toward basic and acidic residues. Substrate is bound by residues Asp1165 and Gly1227. Residues Asp1256, His1258, and Asp1350 each contribute to the a divalent metal cation site. Residues 1485–1704 (QLERQKQLQQ…TPQNINNSDN (220 aa)) are disordered. The segment covering 1491–1616 (QLQQQQQQAQ…NNSNNNNNMN (126 aa)) has biased composition (low complexity). Over residues 1649 to 1669 (LSPNSVNRGNNPSNISMSGAQ) the composition is skewed to polar residues. The segment covering 1677-1698 (SPKPSNSPNSPSTSNNNGTPQN) has biased composition (low complexity).

It belongs to the histone deacetylase family. HD type 2 subfamily.

Its subcellular location is the nucleus. The protein localises to the cytoplasm. It carries out the reaction N(6)-acetyl-L-lysyl-[histone] + H2O = L-lysyl-[histone] + acetate. Functionally, responsible for the deacetylation of lysine residues on the N-terminal part of the core histones (H2A, H2B, H3 and H4). Histone deacetylation plays an important role in transcriptional regulation, cell cycle progression and developmental events. Histone deacetylases act via the formation of large multiprotein complexes. The sequence is that of Type-2 histone deacetylase 2 (hdaC) from Dictyostelium discoideum (Social amoeba).